A 318-amino-acid chain; its full sequence is MKFDPTSPSLNIMLANPRGFCAGVDRAISIVERALELFSPPIYVRHEVVHNRYVVQNLKDRGAVFVEELDQVPDNNIVIFSAHGVSQAVRAEAKARGLRVFDATCPLVTKVHLQVTRASRKGIECILIGHAGHPEVEGTMGQYDNPNGGVYLIESPADVETLEVRDPNNLCFVTQTTLSVDDTLDIISALLKRFPSIEGPRKDDICYATQNRQDAVRNLSADVDLLIVVGSKNSSNSNRLRELALKTGTQSYLVDTADDIDSSWFENITKVAVTAGASAPEVLVQQVVQAIAKLAPSVVTEVEGRKEDTVFAVPAELR.

A [4Fe-4S] cluster-binding site is contributed by C21. The (2E)-4-hydroxy-3-methylbut-2-enyl diphosphate site is built by H50 and H83. 2 residues coordinate dimethylallyl diphosphate: H50 and H83. 2 residues coordinate isopentenyl diphosphate: H50 and H83. [4Fe-4S] cluster is bound at residue C105. H133 is a (2E)-4-hydroxy-3-methylbut-2-enyl diphosphate binding site. Position 133 (H133) interacts with dimethylallyl diphosphate. An isopentenyl diphosphate-binding site is contributed by H133. E135 (proton donor) is an active-site residue. T176 provides a ligand contact to (2E)-4-hydroxy-3-methylbut-2-enyl diphosphate. Position 206 (C206) interacts with [4Fe-4S] cluster. Residues S234, S235, N236, and S278 each contribute to the (2E)-4-hydroxy-3-methylbut-2-enyl diphosphate site. Dimethylallyl diphosphate is bound by residues S234, S235, N236, and S278. S234, S235, N236, and S278 together coordinate isopentenyl diphosphate.

The protein belongs to the IspH family. The cofactor is [4Fe-4S] cluster.

The catalysed reaction is isopentenyl diphosphate + 2 oxidized [2Fe-2S]-[ferredoxin] + H2O = (2E)-4-hydroxy-3-methylbut-2-enyl diphosphate + 2 reduced [2Fe-2S]-[ferredoxin] + 2 H(+). It catalyses the reaction dimethylallyl diphosphate + 2 oxidized [2Fe-2S]-[ferredoxin] + H2O = (2E)-4-hydroxy-3-methylbut-2-enyl diphosphate + 2 reduced [2Fe-2S]-[ferredoxin] + 2 H(+). It participates in isoprenoid biosynthesis; dimethylallyl diphosphate biosynthesis; dimethylallyl diphosphate from (2E)-4-hydroxy-3-methylbutenyl diphosphate: step 1/1. It functions in the pathway isoprenoid biosynthesis; isopentenyl diphosphate biosynthesis via DXP pathway; isopentenyl diphosphate from 1-deoxy-D-xylulose 5-phosphate: step 6/6. In terms of biological role, catalyzes the conversion of 1-hydroxy-2-methyl-2-(E)-butenyl 4-diphosphate (HMBPP) into a mixture of isopentenyl diphosphate (IPP) and dimethylallyl diphosphate (DMAPP). Acts in the terminal step of the DOXP/MEP pathway for isoprenoid precursor biosynthesis. This is 4-hydroxy-3-methylbut-2-enyl diphosphate reductase from Shewanella oneidensis (strain ATCC 700550 / JCM 31522 / CIP 106686 / LMG 19005 / NCIMB 14063 / MR-1).